The following is a 376-amino-acid chain: MSQDYYQILGVSKTANSADLKKAYHKLAKQYHPDNAAAGDTNAEKKFKEINAAYEVLKDEQKRAAYDRFGHDAFQNQQARGGAGSQGGHPFGADINDIFGDFFSDFMGGGGRRKPTSSKVRGSDLKYNLTINLEEAFHGVEKNISFSSEVKCDTCHGSGSEKGETTTTCDACGGVGATRVQQGFFMIEQTCHKCQGNGQIIKNPCKKCHGLGRYHKQRNLSVNIPAGVENGTRIRHPGEGEAGIRGGNNGDLYVDIAIKPHDIYKVDGANLHCKLPISFVNAALGGEVAVPVIEGGKVNLTIPAGTQNGDQLRLCGKGMSKIRSTIRGDMLAHVHVEVPKNLSKRQRELLEELRGESANEKENDGSFFNKMKSLWS.

Residues 4–70 (DYYQILGVSK…QKRAAYDRFG (67 aa)) form the J domain. A CR-type zinc finger spans residues 139-217 (GVEKNISFSS…CHGLGRYHKQ (79 aa)). Residues cysteine 152, cysteine 155, cysteine 169, cysteine 172, cysteine 191, cysteine 194, cysteine 205, and cysteine 208 each contribute to the Zn(2+) site. CXXCXGXG motif repeat units lie at residues 152–159 (CDTCHGSG), 169–176 (CDACGGVG), 191–198 (CHKCQGNG), and 205–212 (CKKCHGLG).

The protein belongs to the DnaJ family. As to quaternary structure, homodimer. Zn(2+) serves as cofactor.

The protein resides in the cytoplasm. Functionally, participates actively in the response to hyperosmotic and heat shock by preventing the aggregation of stress-denatured proteins and by disaggregating proteins, also in an autonomous, DnaK-independent fashion. Unfolded proteins bind initially to DnaJ; upon interaction with the DnaJ-bound protein, DnaK hydrolyzes its bound ATP, resulting in the formation of a stable complex. GrpE releases ADP from DnaK; ATP binding to DnaK triggers the release of the substrate protein, thus completing the reaction cycle. Several rounds of ATP-dependent interactions between DnaJ, DnaK and GrpE are required for fully efficient folding. Also involved, together with DnaK and GrpE, in the DNA replication of plasmids through activation of initiation proteins. This chain is Chaperone protein DnaJ, found in Rickettsia bellii (strain OSU 85-389).